The sequence spans 686 residues: Putative xyloglucan glycosyltransferase 10 (686 aa).

A run of 2 helical transmembrane segments spans residues 114–134 (LYAF…VELA) and 160–180 (AAYV…LFLV). The active site involves Asp-267. Substrate is bound by residues Asp-326 and Asp-328. Asp-420 is an active-site residue. Helical transmembrane passes span 498-518 (LILP…TMFI), 523-543 (LPDW…ILPA), 640-656 (ELAL…RSLL), and 661-681 (IHFY…LDLI).

This sequence belongs to the glycosyltransferase 2 family. Plant cellulose synthase-like C subfamily.

The protein localises to the golgi apparatus membrane. Its function is as follows. Probable beta-1,4-glucan synthase rather involved in the synthesis of the xyloglucan backbone than cellulose. Seems to work simultaneously with xyloglucan 6-xylosyltransferase. Xyloglucan is a noncellulosic polysaccharides of plant cell wall and consists of a glucan backbone substituted by xylose, galactose and fucose. In Oryza sativa subsp. indica (Rice), this protein is Putative xyloglucan glycosyltransferase 10 (CSLC10).